The primary structure comprises 315 residues: Olfactory receptor 11A1 (315 aa).

Over 1 to 27 (MEIVSTGNETITEFVLLGFYDIPELHF) the chain is Extracellular. N-linked (GlcNAc...) asparagine glycosylation is present at asparagine 8. A helical transmembrane segment spans residues 28–48 (LFFIVFTAVYVFIIIGNMLII). Residues 49–56 (VAVVSSQR) lie on the Cytoplasmic side of the membrane. A helical membrane pass occupies residues 57–77 (LHKPMYIFLANLSFLDILYTS). At 78-100 (AVMPKMLEGFLQEATISVAGCLL) the chain is on the extracellular side. The cysteines at positions 98 and 190 are disulfide-linked. Residues 101-121 (QFFIFGSLATAECLLLAVMAY) traverse the membrane as a helical segment. At 122-140 (DRYLAICYPLHYPLLMGPR) the chain is on the cytoplasmic side. The chain crosses the membrane as a helical span at residues 141–161 (RYMGLVVTTWLSGFVVDGLVV). Residues 162-198 (ALVAQLRFCGPNHIDQFYCDFMLFVGLACSDPRVAQV) are Extracellular-facing. The helical transmembrane segment at 199 to 218 (TTLILSVFCLTIPFGLILTS) threads the bilayer. Over 219-238 (YARIVVAVLRVPAGASRRRA) the chain is Cytoplasmic. The chain crosses the membrane as a helical span at residues 239 to 259 (FSTCSSHLAVVTTFYGTLMIF). Residues 260-272 (YVAPSAVHSQLLS) lie on the Extracellular side of the membrane. The helical transmembrane segment at 273–293 (KVFSLLYTVVTPLFNPVIYTM) threads the bilayer. The Cytoplasmic segment spans residues 294-315 (RNKEVHQALRKILCIKQTETLD).

It belongs to the G-protein coupled receptor 1 family.

It localises to the cell membrane. Functionally, odorant receptor. The chain is Olfactory receptor 11A1 (OR11A1) from Homo sapiens (Human).